Consider the following 495-residue polypeptide: Glutamyl-tRNA(Gln) amidotransferase subunit A (495 aa).

Residues K75 and S150 each act as charge relay system in the active site. S174 (acyl-ester intermediate) is an active-site residue.

This sequence belongs to the amidase family. GatA subfamily. As to quaternary structure, heterotrimer of A, B and C subunits.

The enzyme catalyses L-glutamyl-tRNA(Gln) + L-glutamine + ATP + H2O = L-glutaminyl-tRNA(Gln) + L-glutamate + ADP + phosphate + H(+). Allows the formation of correctly charged Gln-tRNA(Gln) through the transamidation of misacylated Glu-tRNA(Gln) in organisms which lack glutaminyl-tRNA synthetase. The reaction takes place in the presence of glutamine and ATP through an activated gamma-phospho-Glu-tRNA(Gln). This chain is Glutamyl-tRNA(Gln) amidotransferase subunit A, found in Ralstonia nicotianae (strain ATCC BAA-1114 / GMI1000) (Ralstonia solanacearum).